Reading from the N-terminus, the 272-residue chain is UPF0759 protein YecE (272 aa).

Belongs to the UPF0759 family.

The sequence is that of UPF0759 protein YecE (yecE) from Escherichia coli O157:H7.